Consider the following 222-residue polypeptide: Probable transaldolase (222 aa).

The active-site Schiff-base intermediate with substrate is the K91.

The protein belongs to the transaldolase family. Type 3B subfamily.

The protein resides in the cytoplasm. The catalysed reaction is D-sedoheptulose 7-phosphate + D-glyceraldehyde 3-phosphate = D-erythrose 4-phosphate + beta-D-fructose 6-phosphate. Its pathway is carbohydrate degradation; pentose phosphate pathway; D-glyceraldehyde 3-phosphate and beta-D-fructose 6-phosphate from D-ribose 5-phosphate and D-xylulose 5-phosphate (non-oxidative stage): step 2/3. Its function is as follows. Transaldolase is important for the balance of metabolites in the pentose-phosphate pathway. The chain is Probable transaldolase from Chlorobium luteolum (strain DSM 273 / BCRC 81028 / 2530) (Pelodictyon luteolum).